We begin with the raw amino-acid sequence, 401 residues long: Probable N-acetyl-gamma-glutamyl-phosphate reductase, chloroplastic (401 aa).

A chloroplast-targeting transit peptide spans 1–48; the sequence is MSTASAFSSIQGCWFKGERKIRVADKRAKRLTLGSHVASPSSMSFRVS. The active site involves Cys-205.

The protein belongs to the NAGSA dehydrogenase family. Type 1 subfamily. As to quaternary structure, homotetramer.

It is found in the plastid. It localises to the chloroplast. It catalyses the reaction N-acetyl-L-glutamate 5-semialdehyde + phosphate + NADP(+) = N-acetyl-L-glutamyl 5-phosphate + NADPH + H(+). The protein operates within amino-acid biosynthesis; L-arginine biosynthesis; N(2)-acetyl-L-ornithine from L-glutamate: step 3/4. In Arabidopsis thaliana (Mouse-ear cress), this protein is Probable N-acetyl-gamma-glutamyl-phosphate reductase, chloroplastic.